Consider the following 485-residue polypeptide: Glycogen synthase (485 aa).

Residue Lys15 coordinates ADP-alpha-D-glucose.

This sequence belongs to the glycosyltransferase 1 family. Bacterial/plant glycogen synthase subfamily.

The catalysed reaction is [(1-&gt;4)-alpha-D-glucosyl](n) + ADP-alpha-D-glucose = [(1-&gt;4)-alpha-D-glucosyl](n+1) + ADP + H(+). It functions in the pathway glycan biosynthesis; glycogen biosynthesis. Functionally, synthesizes alpha-1,4-glucan chains using ADP-glucose. The protein is Glycogen synthase of Rhodospirillum rubrum (strain ATCC 11170 / ATH 1.1.1 / DSM 467 / LMG 4362 / NCIMB 8255 / S1).